A 512-amino-acid chain; its full sequence is 3-ketoacyl-CoA synthase 9 (512 aa).

2 consecutive transmembrane segments (helical) span residues 44–64 (LITHLFKLCLVPLMAVLVTEI) and 83–103 (LVAFIFLSALAIFGSTVYIMS). Residues 100-389 (YIMSRPRSVY…FFMTLVTKKL (290 aa)) enclose the FAE domain. Active-site residues include cysteine 244, histidine 323, histidine 407, histidine 411, histidine 440, and asparagine 444.

It belongs to the thiolase-like superfamily. Chalcone/stilbene synthases family. As to expression, expressed in seedlings, stems, leaves, flowers and siliques. Expressed in roots, leaves, and stems, including epidermis, silique walls, sepals, the upper portion of the styles, and seed coats, but not in developing embryos.

The protein resides in the endoplasmic reticulum membrane. It carries out the reaction a very-long-chain acyl-CoA + malonyl-CoA + H(+) = a very-long-chain 3-oxoacyl-CoA + CO2 + CoA. Its pathway is lipid metabolism; fatty acid biosynthesis. Involved in the elongation of C22 to C24 fatty acids, which are precursors for the biosynthesis of cuticular waxes, aliphatic suberins, and membrane lipids, including sphingolipids and phospholipids. This is 3-ketoacyl-CoA synthase 9 from Arabidopsis thaliana (Mouse-ear cress).